Here is an 83-residue protein sequence, read N- to C-terminus: Colicin-E5 immunity protein in ColE9 (83 aa).

The protein is Colicin-E5 immunity protein in ColE9 of Escherichia coli.